A 354-amino-acid chain; its full sequence is Peptide chain release factor 1 (354 aa).

Gln-230 bears the N5-methylglutamine mark. Residues 282–301 (KQASDAIKKQMIGSGDRSER) are disordered.

This sequence belongs to the prokaryotic/mitochondrial release factor family. In terms of processing, methylated by PrmC. Methylation increases the termination efficiency of RF1.

Its subcellular location is the cytoplasm. Peptide chain release factor 1 directs the termination of translation in response to the peptide chain termination codons UAG and UAA. In Leptospira borgpetersenii serovar Hardjo-bovis (strain L550), this protein is Peptide chain release factor 1.